Consider the following 113-residue polypeptide: Ig heavy chain V-III region U61 (113 aa).

The Ig-like domain maps to 1–113 (EVKLEESGGG…YWGQGTLVPV (113 aa)). The cysteines at positions 22 and 98 are disulfide-linked.

This chain is Ig heavy chain V-III region U61, found in Mus musculus (Mouse).